A 267-amino-acid polypeptide reads, in one-letter code: Neural/ectodermal development factor IMP-L2 (267 aa).

Residues 1-25 form the signal peptide; that stretch reads MEAKMNLHVCALALLLFGSIATVRG. Ig-like C2-type domains lie at 48-149 and 174-260; these read PRNR…KTIY and PRII…TFVY. 2 cysteine pairs are disulfide-bonded: Cys80-Cys139 and Cys195-Cys244.

In terms of tissue distribution, detected in several sites including the ventral neuroectoderm, the tracheal pits, the pharynx and esophagus, and specific neuronal cell bodies, where it is primarily expressed.

It localises to the secreted. Its subcellular location is the extracellular space. In terms of biological role, essential developmental role during embryogenesis, in particular the normal development of the nervous system. May be involved in some aspect of cell adhesion. The chain is Neural/ectodermal development factor IMP-L2 (ImpL2) from Drosophila melanogaster (Fruit fly).